A 519-amino-acid chain; its full sequence is Protein amnionless (519 aa).

Positions 1–19 (MGAPGRVLLWLQLCALTRA) are cleaved as a signal peptide. Residues 20–430 (AYKLWVPNTY…NAPGARSDLM (411 aa)) lie on the Extracellular side of the membrane. N-linked (GlcNAc...) asparagine glycosylation is found at N35 and N39. 6 disulfides stabilise this stretch: C43–C152, C193–C267, C259–C265, C277–C303, C288–C304, and C293–C307. The interaction with CUBN stretch occupies residues 67–143 (SDMEELQDRK…VLASGAGFSA (77 aa)). A VWFC domain is found at 256–308 (PEACADPSGCVCGNAEVQPWICAALLQPLGGRCPQAACQDALRPEGQCCDLCG). Residues 431-451 (GGLVAALLLLLLVLLVAALLL) traverse the membrane as a helical segment. The Cytoplasmic segment spans residues 452 to 519 (RRAGRLRWSR…YGEAEAEAEA (68 aa)).

Interacts (via extracellular region) with CUBN/cubilin, giving rise to a huge complex containing one AMN chain and three CUBN chains. In terms of processing, N-glycosylated. Post-translationally, a soluble form arises by proteolytic removal of the membrane anchor. Detected in kidney cortex (at protein level).

Its subcellular location is the apical cell membrane. It localises to the cell membrane. The protein resides in the endosome membrane. It is found in the membrane. The protein localises to the coated pit. Its function is as follows. Membrane-bound component of the endocytic receptor formed by AMN and CUBN. Required for normal CUBN glycosylation and trafficking to the cell surface. The complex formed by AMN and CUBN is required for efficient absorption of vitamin B12. Required for normal CUBN-mediated protein transport in the kidney. In Sus scrofa (Pig), this protein is Protein amnionless (AMN).